The primary structure comprises 141 residues: ATP synthase epsilon chain (141 aa).

Belongs to the ATPase epsilon chain family. In terms of assembly, F-type ATPases have 2 components, CF(1) - the catalytic core - and CF(0) - the membrane proton channel. CF(1) has five subunits: alpha(3), beta(3), gamma(1), delta(1), epsilon(1). CF(0) has three main subunits: a, b and c.

Its subcellular location is the cell inner membrane. Its function is as follows. Produces ATP from ADP in the presence of a proton gradient across the membrane. In Burkholderia cenocepacia (strain ATCC BAA-245 / DSM 16553 / LMG 16656 / NCTC 13227 / J2315 / CF5610) (Burkholderia cepacia (strain J2315)), this protein is ATP synthase epsilon chain.